The primary structure comprises 208 residues: Protein-L-isoaspartate O-methyltransferase (208 aa).

Ser59 is a catalytic residue.

The protein belongs to the methyltransferase superfamily. L-isoaspartyl/D-aspartyl protein methyltransferase family.

It is found in the cytoplasm. The enzyme catalyses [protein]-L-isoaspartate + S-adenosyl-L-methionine = [protein]-L-isoaspartate alpha-methyl ester + S-adenosyl-L-homocysteine. Catalyzes the methyl esterification of L-isoaspartyl residues in peptides and proteins that result from spontaneous decomposition of normal L-aspartyl and L-asparaginyl residues. It plays a role in the repair and/or degradation of damaged proteins. This is Protein-L-isoaspartate O-methyltransferase from Aliivibrio fischeri (strain MJ11) (Vibrio fischeri).